A 587-amino-acid chain; its full sequence is Tripartite motif-containing protein 29 (587 aa).

Positions 1 to 71 (MEGADACRSN…SGEGKSGLFS (71 aa)) are disordered. Residues serine 21, serine 28, serine 58, and serine 104 each carry the phosphoserine modification. Residue tyrosine 106 is modified to Phosphotyrosine. A B box-type zinc finger spans residues 220–260 (FEARKCPLHGKTMELFCQTDQTCICYLCMFQEHKNHSTVTV). Zn(2+)-binding residues include cysteine 225, histidine 228, cysteine 247, and histidine 252. The stretch at 259-348 (TVEEAKAEKE…AVDQVKVIVD (90 aa)) forms a coiled coil. Phosphothreonine is present on threonine 476. Serine 489 is modified (phosphoserine).

Interacts with VIM and HINT1. Interacts with IKBKG/NEMO. Interacts with STING1.

It localises to the cytoplasm. The protein localises to the lysosome. Its function is as follows. Plays a crucial role in the regulation of macrophage activation in response to viral or bacterial infections within the respiratory tract. Mechanistically, TRIM29 interacts with IKBKG/NEMO in the lysosome where it induces its 'Lys-48' ubiquitination and subsequent degradation. In turn, the expression of type I interferons and the production of pro-inflammatory cytokines are inhibited. Additionally, induces the 'Lys-48' ubiquitination of STING1 in a similar way, leading to its degradation. The sequence is that of Tripartite motif-containing protein 29 (Trim29) from Mus musculus (Mouse).